A 1368-amino-acid chain; its full sequence is DNA-directed RNA polymerase subunit beta (1368 aa).

It belongs to the RNA polymerase beta chain family. As to quaternary structure, the RNAP catalytic core consists of 2 alpha, 1 beta, 1 beta' and 1 omega subunit. When a sigma factor is associated with the core the holoenzyme is formed, which can initiate transcription.

It catalyses the reaction RNA(n) + a ribonucleoside 5'-triphosphate = RNA(n+1) + diphosphate. Its function is as follows. DNA-dependent RNA polymerase catalyzes the transcription of DNA into RNA using the four ribonucleoside triphosphates as substrates. In Cupriavidus taiwanensis (strain DSM 17343 / BCRC 17206 / CCUG 44338 / CIP 107171 / LMG 19424 / R1) (Ralstonia taiwanensis (strain LMG 19424)), this protein is DNA-directed RNA polymerase subunit beta.